The primary structure comprises 228 residues: 2,3-bisphosphoglycerate-dependent phosphoglycerate mutase (228 aa).

Residues 8 to 15, 21 to 22, Arg-60, 87 to 90, Lys-98, 114 to 115, and 180 to 181 each bind substrate; these read RHGQSQWN, TG, ERHY, RR, and GN. His-9 (tele-phosphohistidine intermediate) is an active-site residue. The Proton donor/acceptor role is filled by Glu-87.

This sequence belongs to the phosphoglycerate mutase family. BPG-dependent PGAM subfamily. Homodimer.

It catalyses the reaction (2R)-2-phosphoglycerate = (2R)-3-phosphoglycerate. Its pathway is carbohydrate degradation; glycolysis; pyruvate from D-glyceraldehyde 3-phosphate: step 3/5. Catalyzes the interconversion of 2-phosphoglycerate and 3-phosphoglycerate. The sequence is that of 2,3-bisphosphoglycerate-dependent phosphoglycerate mutase from Sphingopyxis alaskensis (strain DSM 13593 / LMG 18877 / RB2256) (Sphingomonas alaskensis).